The primary structure comprises 194 residues: MPWVGSQFHKGDAQTIMALSNVLYQVLIALGMIYVIDTSAIISRNLNLLEGDLMFPSSVIGEIKKGKLRYMIDVLLPMIRVASPDHEYLKIVEETAAKTGDLMNLSQTDKDVLALALQYDATIVTDDYSIQNVASYLNLGFLNANIKRIDKQIAWIYRCTGCKKVFPGPVKVCDICGHEVKRHYDKRKSMIRKV.

Residues 34–134 form the PINc domain; it reads YVIDTSAIIS…TDDYSIQNVA (101 aa). Mg(2+) is bound by residues D37 and D150.

The protein belongs to the PINc/VapC protein family. Mg(2+) serves as cofactor.

Toxic component of a type II toxin-antitoxin (TA) system. An RNase. This is Ribonuclease VapC1 from Thermoplasma acidophilum (strain ATCC 25905 / DSM 1728 / JCM 9062 / NBRC 15155 / AMRC-C165).